The primary structure comprises 454 residues: GTPase Der (454 aa).

EngA-type G domains follow at residues 4-167 and 188-363; these read AIVA…SEDK and LQLA…ASWQ. Residues 10-17, 56-60, 121-124, 194-201, 241-245, and 306-309 each bind GTP; these read GKPNVGKS, DTPGL, NKTE, GRPNCGKS, DTAGV, and NKCD. Positions 364 to 450 constitute a KH-like domain; that stretch reads KRVTTGTLNQ…PVRLSFVKGK (87 aa).

This sequence belongs to the TRAFAC class TrmE-Era-EngA-EngB-Septin-like GTPase superfamily. EngA (Der) GTPase family. As to quaternary structure, associates with the 50S ribosomal subunit.

Functionally, GTPase that plays an essential role in the late steps of ribosome biogenesis. The protein is GTPase Der of Orientia tsutsugamushi (strain Boryong) (Rickettsia tsutsugamushi).